We begin with the raw amino-acid sequence, 697 residues long: SITS-binding protein (697 aa).

The disordered stretch occupies residues 1–20; it reads MARRAKKMASNSGDSSPEPG. Topologically, residues 2-29 are cytoplasmic; the sequence is ARRAKKMASNSGDSSPEPGIKEINETWK. A helical membrane pass occupies residues 30–50; sequence GAIACLGVALLFLMTIGVLYW. Asn-112, Asn-134, Asn-162, Asn-386, Asn-405, and Asn-470 each carry an N-linked (GlcNAc...) asparagine glycan. The next 2 membrane-spanning stretches (helical) occupy residues 503 to 521 and 542 to 562; these read GLIP…FFIP and WMQI…WVFG. An N-linked (GlcNAc...) asparagine glycan is attached at Asn-568.

This sequence belongs to the glycosyl hydrolase 31 family. As to quaternary structure, homodimer; disulfide-linked. As to expression, electroplax tissue, brain (200-fold less), and heart (500-fold less).

Its subcellular location is the membrane. This glycoprotein is probably not a functional part of the chloride channel. This chain is SITS-binding protein, found in Tetronarce californica (Pacific electric ray).